Reading from the N-terminus, the 302-residue chain is Diacetylchitobiose uptake system permease protein NgcG (302 aa).

A run of 6 helical transmembrane segments spans residues 40–60, 99–119, 131–151, 166–186, 221–241, and 268–288; these read LLIL…MSSF, VIVV…CAYV, IYYV…VPLF, LILT…YSFF, AAVA…PVAL, and GALF…YCVF. In terms of domain architecture, ABC transmembrane type-1 spans 95-288; it reads FLNSVIVVVS…VPVLLVYCVF (194 aa).

This sequence belongs to the binding-protein-dependent transport system permease family. The complex is composed of two ATP-binding proteins (MsiK), two transmembrane proteins (NgcF and NgcG) and a solute-binding protein (NgcE).

The protein localises to the cell membrane. Functionally, part of the ABC transporter complex NgcEFG-MsiK involved in N,N'-diacetylchitobiose ((GlcNAc)2) uptake. Responsible for the translocation of the substrate across the membrane. The polypeptide is Diacetylchitobiose uptake system permease protein NgcG (Streptomyces coelicolor (strain ATCC BAA-471 / A3(2) / M145)).